Reading from the N-terminus, the 234-residue chain is Zinc finger BED domain-containing protein 3 (234 aa).

Residues 19–42 are disordered; that stretch reads AAARGGQCPGLGPAPTPTPPGRLG. The BED-type zinc finger occupies 43-104; the sequence is APYSEAWGYF…SAHRRELESS (62 aa). Residues Cys69, Cys72, His92, and His97 each coordinate Zn(2+). Disordered regions lie at residues 94–126 and 202–225; these read RSAHRRELESSGAGSSPPAAPCPPPPGPAAAPE and REGALGWAPAAPPPLKDDPEGDRD. Over residues 111–122 the composition is skewed to pro residues; sequence PAAPCPPPPGPA. A compositionally biased stretch (basic and acidic residues) spans 216 to 225; sequence LKDDPEGDRD.

Associates with the subcortical maternal complex (SCMC) composed of at least NLRP5, KHDC3L, OOEP, and TLE6 via interaction with NLRP5 and TLE6. Interacts with AXIN1; the interaction is direct, enhanced by protein kinase GSK3B and casein kinase CSNK1E activities and decreases GSK3B-induced beta-catenin serine and threonine phosphorylations. Secreted in blood plasma, and expressed in skeletal muscle and adipose tissue (at protein level).

The protein resides in the cytoplasm. Its subcellular location is the membrane. The protein localises to the secreted. Functionally, acts as a positive regulator in the activation of the canonical Wnt/beta-catenin signaling pathway by stabilizing cytoplasmic beta-catenin. Involved in transcription activation of Wnt target gene expression. Plays a role in symmetric division of blastomeres in the early stages of embryogenesis via regulation of mitotic spindle central positioning and organization of the F-actin filament network. Plays a role in regulating the distribution of cellular organelles, via modulation of cytoskeletal dynamics and cytoplasmic lattice formation. The polypeptide is Zinc finger BED domain-containing protein 3 (ZBED3) (Homo sapiens (Human)).